Consider the following 665-residue polypeptide: Translation factor guf1, mitochondrial (665 aa).

Residues 1 to 53 constitute a mitochondrion transit peptide; that stretch reads MRGCLQVLRWLSTSPARRPVSSGLRLRSYEIVSPSILRPFTSTVRRQAQASRN. The 181-residue stretch at 67-247 folds into the tr-type G domain; it reads ERFRNFCIVA…TVIERIPAPV (181 aa). GTP-binding positions include 76-83, 140-144, and 194-197; these read AHVDHGKS, DTPGH, and NKVD.

It belongs to the TRAFAC class translation factor GTPase superfamily. Classic translation factor GTPase family. LepA subfamily.

Its subcellular location is the mitochondrion inner membrane. It carries out the reaction GTP + H2O = GDP + phosphate + H(+). Its function is as follows. Promotes mitochondrial protein synthesis. May act as a fidelity factor of the translation reaction, by catalyzing a one-codon backward translocation of tRNAs on improperly translocated ribosomes. Binds to mitochondrial ribosomes in a GTP-dependent manner. The chain is Translation factor guf1, mitochondrial (guf1) from Talaromyces stipitatus (strain ATCC 10500 / CBS 375.48 / QM 6759 / NRRL 1006) (Penicillium stipitatum).